Reading from the N-terminus, the 64-residue chain is Large ribosomal subunit protein bL35 (64 aa).

Positions 1–17 are enriched in basic residues; sequence MKQKTHSGIKKRIKKTG. Positions 1–64 are disordered; it reads MKQKTHSGIK…KRVNRLLGEG (64 aa). Basic and acidic residues predominate over residues 21–33; that stretch reads LRREQANRRHLLE.

It belongs to the bacterial ribosomal protein bL35 family.

The sequence is that of Large ribosomal subunit protein bL35 from Corynebacterium kroppenstedtii (strain DSM 44385 / JCM 11950 / CIP 105744 / CCUG 35717).